A 415-amino-acid chain; its full sequence is MAEPPRSCDCFVSLPPGSKEDYVIFGKNSDRPRDEVQEVVYFPASSHPPASTVECTYISIPQVEHTNAVVLSRPAWLWGAEMGANEHGVCVGNEAVWTKEPVNPEEALLGMDLVRLGLERGDSARAALNVITALLEQFGQGGACRETSEPFSYHNTFLLVDRQEAWVLETAGKLWAAQKVTEGVKNISNQLTIDFEISAEHPDLRSVAQAQGWWSGEGDFSFTAVFSPDHPPARMEMAKQRYRGGTALLQQHNGSVTAEVMMSILRDKASGICMDSEGFRTTGSMVSILPRNPNMPCVHFLTATPDPSRSVFKPFIFSESVRPVSMVMSPQYGPGDPVRTLPRFQHQVDRKHELYKAHQMANTSSDAGVSLQDTMRYLESQCLEEIEAMLRGEVQGQELGDLFFDCVDAEIKFYQ.

Cysteine 8 is a catalytic residue.

This sequence belongs to the peptidase C69 family. Secernin subfamily.

The chain is Secernin-2 (scrn2) from Danio rerio (Zebrafish).